Here is a 335-residue protein sequence, read N- to C-terminus: [Citrate [pro-3S]-lyase] ligase (335 aa).

One can recognise an N-acetyltransferase domain in the interval 1–131 (MQFERISTEQ…SATRLQKQCS (131 aa)).

The enzyme catalyses holo-[citrate lyase ACP] + acetate + ATP = acetyl-[citrate lyase ACP] + AMP + diphosphate. Its function is as follows. Acetylation of prosthetic group (2-(5''-phosphoribosyl)-3'-dephosphocoenzyme-A) of the gamma subunit of citrate lyase. This is [Citrate [pro-3S]-lyase] ligase (citC) from Haemophilus influenzae (strain ATCC 51907 / DSM 11121 / KW20 / Rd).